The sequence spans 188 residues: Calcium load-activated calcium channel (188 aa).

The Lumenal segment spans residues 1-4 (MSTM). Residues 5-32 (FADTLLIVFISVCTALLAEGITWVLVYR) traverse the membrane as a helical segment. Residues 32–89 (RTDKYKRLKAEVEKQSKKLEKKKETITESAGRQQKKKIERQEEKLKNNNRDLSMVRMK) adopt a coiled-coil conformation. Topologically, residues 33-86 (TDKYKRLKAEVEKQSKKLEKKKETITESAGRQQKKKIERQEEKLKNNNRDLSMV) are cytoplasmic. Serine 60 carries the post-translational modification Phosphoserine. A helical transmembrane segment spans residues 87–106 (RMKSMFAIGFCFTALMGMFN). Residues 107 to 120 (SIFDGRVVAKLPFT) are Lumenal-facing. Residues 121-130 (PLSYIQGLSH) lie within the membrane without spanning it. At 131–140 (RNLLGDDTTD) the chain is on the lumenal side. The chain crosses the membrane as a helical span at residues 141 to 162 (CSFIFLYILCTMSIRQNIQKIL). Residues 163 to 188 (GLAPSRAATKQAGGFLGPPPPSGKFS) are Cytoplasmic-facing. Position 188 is a phosphoserine (serine 188).

The protein belongs to the TMCO1 family. Homodimer and homotetramer. Homodimer under resting conditions; forms homotetramers following ER calcium overload. Component of the GET- and EMC-like (GEL) complex, composed of RAB5IF/OPTI and TMCO1. The GEL complex is part of the multi-pass translocon (MPT) complex, composed of three subcomplexes, the GEL complex (composed of RAB5IF/OPTI and TMCO1), the BOS complex (composed of NCLN/Nicalin, NOMO1 and TMEM147) and the PAT complex (composed of WDR83OS/Asterix and CCDC47). The MPT complex associates with the SEC61 complex.

It is found in the endoplasmic reticulum membrane. It localises to the golgi apparatus membrane. Its subcellular location is the mitochondrion membrane. It catalyses the reaction Ca(2+)(in) = Ca(2+)(out). In terms of biological role, endoplasmic reticulum (ER) calcium-selective channel preventing intracellular Ca2(+) stores from overfilling and maintaining calcium homeostasis in the ER. In response to endoplasmic reticulum (ER) Ca2(+) overloading, assembles into a homotetramer, forming a functional calcium-selective channel facilitating Ca2(+) release. Mediates ER Ca2(+) homeostasis in osteoblasts and plays a key role in bone formation, via the CaMKII-HDAC4-RUNX2 signaling axis. Component of the multi-pass translocon (MPT) complex that mediates insertion of multi-pass membrane proteins into the lipid bilayer of membranes. The MPT complex takes over after the SEC61 complex: following membrane insertion of the first few transmembrane segments of proteins by the SEC61 complex, the MPT complex occludes the lateral gate of the SEC61 complex to promote insertion of subsequent transmembrane regions. Within the MPT complex, the GEL subcomplex may mediate insertion of transmembrane regions into the membrane. In Bos taurus (Bovine), this protein is Calcium load-activated calcium channel.